The primary structure comprises 195 residues: NAD(P)H-quinone oxidoreductase subunit J, chloroplastic (195 aa).

This sequence belongs to the complex I 30 kDa subunit family. NDH is composed of at least 16 different subunits, 5 of which are encoded in the nucleus.

It is found in the plastid. Its subcellular location is the chloroplast thylakoid membrane. It catalyses the reaction a plastoquinone + NADH + (n+1) H(+)(in) = a plastoquinol + NAD(+) + n H(+)(out). The enzyme catalyses a plastoquinone + NADPH + (n+1) H(+)(in) = a plastoquinol + NADP(+) + n H(+)(out). NDH shuttles electrons from NAD(P)H:plastoquinone, via FMN and iron-sulfur (Fe-S) centers, to quinones in the photosynthetic chain and possibly in a chloroplast respiratory chain. The immediate electron acceptor for the enzyme in this species is believed to be plastoquinone. Couples the redox reaction to proton translocation, and thus conserves the redox energy in a proton gradient. The polypeptide is NAD(P)H-quinone oxidoreductase subunit J, chloroplastic (Chlorokybus atmophyticus (Soil alga)).